The following is a 274-amino-acid chain: Glutamate--cysteine ligase regulatory subunit (274 aa).

Serine 59 carries the phosphoserine modification. Lysine 263 is modified (N6-acetyllysine).

This sequence belongs to the aldo/keto reductase family. Glutamate--cysteine ligase light chain subfamily. In terms of assembly, heterodimer of a catalytic heavy chain and a regulatory light chain. As to expression, most abundant in kidney. Also found in liver and testis.

It participates in sulfur metabolism; glutathione biosynthesis; glutathione from L-cysteine and L-glutamate: step 1/2. This Rattus norvegicus (Rat) protein is Glutamate--cysteine ligase regulatory subunit (Gclm).